The primary structure comprises 539 residues: MRVNNLTPQDLKAYGINDVQDIVYNPSYDTLYQEELNPGLEGYERGVLTNLGAVAVDTGIFTGRSPKDKYIVRDDTTRDTLWWSDKGKGKNDNKPLSQETWQHLKDLVTHQLSGKRLFVVDAFCGANADTRLSVRFITEVAWQAHFVKNMFIRPTDEELVNFKPDFIVMNGAKCTNPQWKEQGLNSENFVAFNLTERIQLIGGTWYGGEMKKGMFSVMNYLLPLKGIASMHCSANVGEKGDVAVFFGLSGTGKTTLSTDPKRRLIGDDEHGWDDDGVFNFEGGCYAKTIKLSKEAEPEIYHAIRRDALLENVTVREDGTVDFDDGSKTENTRVSYPIYHIDNIVKPVSKAGHATKVIFLTADAFGVLPPVSRLTANQTQYHFLSGFTAKLAGTERGVTEPTPTFSACFGAAFLSLHPTQYAEVLVKRMQAAGAQAYLVNTGWNGTGKRISIKDTRAIIDAILNGSLDNAETFRLPLFDLAIPTELPGVDTRILDPRNTYASPEQWQEKATALAKLFIENFEKYTDTPAGEALVTAGPKL.

Substrate-binding residues include Arg64, Tyr206, and Lys212. Residues Lys212, His231, and 247-255 (GLSGTGKTT) contribute to the ATP site. Residues Lys212 and His231 each contribute to the Mn(2+) site. Asp268 lines the Mn(2+) pocket. ATP-binding positions include Glu296, Arg332, 448-449 (RI), and Thr454. Arg332 is a binding site for substrate.

Belongs to the phosphoenolpyruvate carboxykinase (ATP) family. In terms of assembly, monomer. Mn(2+) serves as cofactor.

Its subcellular location is the cytoplasm. It catalyses the reaction oxaloacetate + ATP = phosphoenolpyruvate + ADP + CO2. It functions in the pathway carbohydrate biosynthesis; gluconeogenesis. Its function is as follows. Involved in the gluconeogenesis. Catalyzes the conversion of oxaloacetate (OAA) to phosphoenolpyruvate (PEP) through direct phosphoryl transfer between the nucleoside triphosphate and OAA. This Salmonella arizonae (strain ATCC BAA-731 / CDC346-86 / RSK2980) protein is Phosphoenolpyruvate carboxykinase (ATP).